The sequence spans 215 residues: Probable phosphoglycerate mutase GpmB (215 aa).

Substrate is bound by residues R8–N15, Q21–G22, R58, R60, E82–M85, R104–R105, and G151–I152. H9 acts as the Tele-phosphohistidine intermediate in catalysis. E82 functions as the Proton donor/acceptor in the catalytic mechanism.

The protein belongs to the phosphoglycerate mutase family. GpmB subfamily.

It catalyses the reaction (2R)-2-phosphoglycerate = (2R)-3-phosphoglycerate. It participates in carbohydrate degradation; glycolysis; pyruvate from D-glyceraldehyde 3-phosphate: step 3/5. In Shigella dysenteriae serotype 1 (strain Sd197), this protein is Probable phosphoglycerate mutase GpmB.